We begin with the raw amino-acid sequence, 197 residues long: Beta-crystallin A2 (197 aa).

Positions 1–11 (MSSAPAQGPAP) are N-terminal arm. 2 Beta/gamma crystallin 'Greek key' domains span residues 12–52 (ASLT…KVEN) and 53–99 (GAWV…RPVL). The connecting peptide stretch occupies residues 100–105 (CANHSD). Beta/gamma crystallin 'Greek key' domains lie at 106–147 (SRVT…KVSS) and 148–196 (GAWV…RRVQ).

This sequence belongs to the beta/gamma-crystallin family. As to quaternary structure, homo/heterodimer, or complexes of higher-order. The structure of beta-crystallin oligomers seems to be stabilized through interactions between the N-terminal arms.

Its function is as follows. Crystallins are the dominant structural components of the vertebrate eye lens. In Bos taurus (Bovine), this protein is Beta-crystallin A2 (CRYBA2).